A 225-amino-acid polypeptide reads, in one-letter code: NAD(P)H-quinone oxidoreductase subunit K, chloroplastic (225 aa).

Positions 43, 44, 108, and 139 each coordinate [4Fe-4S] cluster.

It belongs to the complex I 20 kDa subunit family. As to quaternary structure, NDH is composed of at least 16 different subunits, 5 of which are encoded in the nucleus. The cofactor is [4Fe-4S] cluster.

Its subcellular location is the plastid. It localises to the chloroplast thylakoid membrane. It catalyses the reaction a plastoquinone + NADH + (n+1) H(+)(in) = a plastoquinol + NAD(+) + n H(+)(out). It carries out the reaction a plastoquinone + NADPH + (n+1) H(+)(in) = a plastoquinol + NADP(+) + n H(+)(out). NDH shuttles electrons from NAD(P)H:plastoquinone, via FMN and iron-sulfur (Fe-S) centers, to quinones in the photosynthetic chain and possibly in a chloroplast respiratory chain. The immediate electron acceptor for the enzyme in this species is believed to be plastoquinone. Couples the redox reaction to proton translocation, and thus conserves the redox energy in a proton gradient. The chain is NAD(P)H-quinone oxidoreductase subunit K, chloroplastic from Lepidium virginicum (Virginia pepperweed).